We begin with the raw amino-acid sequence, 271 residues long: Acyl-[acyl-carrier-protein]--UDP-N-acetylglucosamine O-acyltransferase (271 aa).

This sequence belongs to the transferase hexapeptide repeat family. LpxA subfamily. Homotrimer.

It is found in the cytoplasm. The enzyme catalyses a (3R)-hydroxyacyl-[ACP] + UDP-N-acetyl-alpha-D-glucosamine = a UDP-3-O-[(3R)-3-hydroxyacyl]-N-acetyl-alpha-D-glucosamine + holo-[ACP]. It participates in glycolipid biosynthesis; lipid IV(A) biosynthesis; lipid IV(A) from (3R)-3-hydroxytetradecanoyl-[acyl-carrier-protein] and UDP-N-acetyl-alpha-D-glucosamine: step 1/6. In terms of biological role, involved in the biosynthesis of lipid A, a phosphorylated glycolipid that anchors the lipopolysaccharide to the outer membrane of the cell. This chain is Acyl-[acyl-carrier-protein]--UDP-N-acetylglucosamine O-acyltransferase, found in Ralstonia nicotianae (strain ATCC BAA-1114 / GMI1000) (Ralstonia solanacearum).